The sequence spans 166 residues: NADH-quinone oxidoreductase subunit B 1 (166 aa).

The [4Fe-4S] cluster site is built by C39, C40, C106, and C135.

Belongs to the complex I 20 kDa subunit family. NDH-1 is composed of 14 different subunits. Subunits NuoB, C, D, E, F, and G constitute the peripheral sector of the complex. Requires [4Fe-4S] cluster as cofactor.

It localises to the cell membrane. The catalysed reaction is a quinone + NADH + 5 H(+)(in) = a quinol + NAD(+) + 4 H(+)(out). NDH-1 shuttles electrons from NADH, via FMN and iron-sulfur (Fe-S) centers, to quinones in the respiratory chain. The immediate electron acceptor for the enzyme in this species is believed to be a menaquinone. Couples the redox reaction to proton translocation (for every two electrons transferred, four hydrogen ions are translocated across the cytoplasmic membrane), and thus conserves the redox energy in a proton gradient. This Symbiobacterium thermophilum (strain DSM 24528 / JCM 14929 / IAM 14863 / T) protein is NADH-quinone oxidoreductase subunit B 1.